The chain runs to 459 residues: Elongation factor 1-alpha 2 (459 aa).

The 238-residue stretch at 5 to 242 folds into the tr-type G domain; sequence KTHINIVVIG…DCIIPPQRPT (238 aa). Residues 14–21 are G1; the sequence is GHVDSGKS. The segment at 70–74 is G2; sequence GITID. The G3 stretch occupies residues 91 to 94; it reads DAPG. The G4 stretch occupies residues 153–156; the sequence is NKMD. Residues 194-196 form a G5 region; it reads SGF. Residues glutamate 301 and glutamate 374 each carry the 5-glutamyl glycerylphosphorylethanolamine modification.

This sequence belongs to the TRAFAC class translation factor GTPase superfamily. Classic translation factor GTPase family. EF-Tu/EF-1A subfamily.

It localises to the cytoplasm. Functionally, this protein promotes the GTP-dependent binding of aminoacyl-tRNA to the A-site of ribosomes during protein biosynthesis. In Oscheius tipulae, this protein is Elongation factor 1-alpha 2 (eft-2).